The sequence spans 348 residues: Dihydroorotase (348 aa).

2 residues coordinate Zn(2+): histidine 17 and histidine 19. Substrate contacts are provided by residues 19–21 (HLR) and asparagine 45. 3 residues coordinate Zn(2+): lysine 103, histidine 140, and histidine 178. Lysine 103 carries the N6-carboxylysine modification. Histidine 140 contacts substrate. Substrate is bound at residue leucine 223. Aspartate 251 is a binding site for Zn(2+). Residue aspartate 251 is part of the active site. Substrate-binding residues include histidine 255 and alanine 267.

The protein belongs to the metallo-dependent hydrolases superfamily. DHOase family. Class II DHOase subfamily. In terms of assembly, homodimer. The cofactor is Zn(2+).

The catalysed reaction is (S)-dihydroorotate + H2O = N-carbamoyl-L-aspartate + H(+). The protein operates within pyrimidine metabolism; UMP biosynthesis via de novo pathway; (S)-dihydroorotate from bicarbonate: step 3/3. Functionally, catalyzes the reversible cyclization of carbamoyl aspartate to dihydroorotate. The chain is Dihydroorotase from Shigella flexneri serotype 5b (strain 8401).